Consider the following 285-residue polypeptide: Ribosomal RNA small subunit methyltransferase A (285 aa).

S-adenosyl-L-methionine is bound by residues Asn30, Leu32, Gly57, Glu78, Asp101, and Asn121.

This sequence belongs to the class I-like SAM-binding methyltransferase superfamily. rRNA adenine N(6)-methyltransferase family. RsmA subfamily.

The protein localises to the cytoplasm. The enzyme catalyses adenosine(1518)/adenosine(1519) in 16S rRNA + 4 S-adenosyl-L-methionine = N(6)-dimethyladenosine(1518)/N(6)-dimethyladenosine(1519) in 16S rRNA + 4 S-adenosyl-L-homocysteine + 4 H(+). Specifically dimethylates two adjacent adenosines (A1518 and A1519) in the loop of a conserved hairpin near the 3'-end of 16S rRNA in the 30S particle. May play a critical role in biogenesis of 30S subunits. This Treponema pallidum (strain Nichols) protein is Ribosomal RNA small subunit methyltransferase A.